The sequence spans 511 residues: UDP-N-acetylmuramoyl-L-alanyl-D-glutamate--2,6-diaminopimelate ligase (511 aa).

Residue Ser-33 coordinates UDP-N-acetyl-alpha-D-muramoyl-L-alanyl-D-glutamate. Residue 118–124 (GTNGKTT) coordinates ATP. Residues 160–161 (TT), Ser-187, Gln-193, and Arg-195 contribute to the UDP-N-acetyl-alpha-D-muramoyl-L-alanyl-D-glutamate site. The residue at position 227 (Lys-227) is an N6-carboxylysine. Meso-2,6-diaminopimelate contacts are provided by residues Arg-403, 427–430 (DNPR), Gly-478, and Glu-482. The short motif at 427–430 (DNPR) is the Meso-diaminopimelate recognition motif element.

Belongs to the MurCDEF family. MurE subfamily. Mg(2+) serves as cofactor. In terms of processing, carboxylation is probably crucial for Mg(2+) binding and, consequently, for the gamma-phosphate positioning of ATP.

Its subcellular location is the cytoplasm. It carries out the reaction UDP-N-acetyl-alpha-D-muramoyl-L-alanyl-D-glutamate + meso-2,6-diaminopimelate + ATP = UDP-N-acetyl-alpha-D-muramoyl-L-alanyl-gamma-D-glutamyl-meso-2,6-diaminopimelate + ADP + phosphate + H(+). Its pathway is cell wall biogenesis; peptidoglycan biosynthesis. Functionally, catalyzes the addition of meso-diaminopimelic acid to the nucleotide precursor UDP-N-acetylmuramoyl-L-alanyl-D-glutamate (UMAG) in the biosynthesis of bacterial cell-wall peptidoglycan. This chain is UDP-N-acetylmuramoyl-L-alanyl-D-glutamate--2,6-diaminopimelate ligase, found in Prochlorococcus marinus subsp. pastoris (strain CCMP1986 / NIES-2087 / MED4).